Reading from the N-terminus, the 61-residue chain is uncharacterized protein (61 aa).

Residues 1-20 (MSSTTSTINLSSLGSAINDV) are Extracellular-facing. Residues 21–41 (LNIIVQYLPVFVTVAVLFGII) form a helical membrane-spanning segment. Residues 42-61 (TYMTGGLGGLFSGITGIFGS) are Cytoplasmic-facing.

It is found in the host membrane. This is an uncharacterized protein from Acidianus filamentous virus 2 (isolate Italy/Pozzuoli) (AFV-2).